The chain runs to 851 residues: DNA mismatch repair protein MutS (851 aa).

ATP is bound at residue 614 to 621 (GPNMGGKS).

The protein belongs to the DNA mismatch repair MutS family.

Its function is as follows. This protein is involved in the repair of mismatches in DNA. It is possible that it carries out the mismatch recognition step. This protein has a weak ATPase activity. This is DNA mismatch repair protein MutS from Yersinia enterocolitica serotype O:8 / biotype 1B (strain NCTC 13174 / 8081).